Consider the following 126-residue polypeptide: Large ribosomal subunit protein bL12 (126 aa).

The protein belongs to the bacterial ribosomal protein bL12 family. Homodimer. Part of the ribosomal stalk of the 50S ribosomal subunit. Forms a multimeric L10(L12)X complex, where L10 forms an elongated spine to which 2 to 4 L12 dimers bind in a sequential fashion. Binds GTP-bound translation factors.

Functionally, forms part of the ribosomal stalk which helps the ribosome interact with GTP-bound translation factors. Is thus essential for accurate translation. The polypeptide is Large ribosomal subunit protein bL12 (Prosthecochloris aestuarii (strain DSM 271 / SK 413)).